The sequence spans 1088 residues: uncharacterized protein (1088 aa).

A Phosphoserine modification is found at serine 299. Residues 954-980 (PRSSVATTASTESSEQGPKMKRMARRK) form a disordered region. Over residues 956-968 (SSVATTASTESSE) the composition is skewed to low complexity. Serine 984 is subject to Phosphoserine. Threonine 1013 carries the phosphothreonine modification. Residues 1063 to 1088 (MKVTDKAKDEDIDPMDPMSPLNKDVS) are disordered. Serine 1081 carries the phosphoserine modification.

This is an uncharacterized protein from Saccharomyces cerevisiae (strain ATCC 204508 / S288c) (Baker's yeast).